The primary structure comprises 76 residues: MPSVRSVTCCCLLWMMFSVQLVTPGSPGTAQLSGHRTARFPRPRICNLACRAGIGHKYPFCHCRGKRDAVSSSMAV.

Positions Met-1–Pro-24 are cleaved as a signal peptide. The propeptide occupies Gly-25–Arg-39. 2 disulfide bridges follow: Cys-46-Cys-61 and Cys-50-Cys-63. Position 64 is an arginine amide (Arg-64). A propeptide spanning residues Gly-65–Val-76 is cleaved from the precursor.

Belongs to the conotoxin J superfamily. Expressed by the venom duct.

Its subcellular location is the secreted. Functionally, highly inhibits both nicotinic acetylcholine receptors (neuronal (IC(50)=8.7 uM for alpha-3/beta-4) and muscular (IC(50)=0.54 uM for alpha-1-beta-1-epsilon-delta (CHRNA1-CHRNB1-CHRND-CHRNE)) subtypes) and the voltage-gated potassium channel Kv1.6/KCNA6 subtype (IC(50)=1.59 uM). The sequence is that of Alpha/kappa-conotoxin pl14a from Conus planorbis (Planorbis cone).